The chain runs to 302 residues: N(G),N(G)-dimethylarginine dimethylaminohydrolase (302 aa).

Residues Asp-102, Arg-127, and Arg-172 each contribute to the substrate site. His-201 acts as the Proton donor in catalysis. Cys-295 serves as the catalytic Nucleophile.

It belongs to the DDAH family.

The enzyme catalyses N(omega),N(omega)-dimethyl-L-arginine + H2O = dimethylamine + L-citrulline. It carries out the reaction N(omega)-methyl-L-arginine + H2O = L-citrulline + methylamine. Its function is as follows. Hydrolyzes N(G),N(G)-dimethyl-L-arginine (ADMA) and N(G)-monomethyl-L-arginine (MMA). This is N(G),N(G)-dimethylarginine dimethylaminohydrolase from Mycobacterium tuberculosis (strain ATCC 25618 / H37Rv).